The sequence spans 415 residues: Gamma-glutamyl phosphate reductase (415 aa).

It belongs to the gamma-glutamyl phosphate reductase family.

It localises to the cytoplasm. The catalysed reaction is L-glutamate 5-semialdehyde + phosphate + NADP(+) = L-glutamyl 5-phosphate + NADPH + H(+). It functions in the pathway amino-acid biosynthesis; L-proline biosynthesis; L-glutamate 5-semialdehyde from L-glutamate: step 2/2. Functionally, catalyzes the NADPH-dependent reduction of L-glutamate 5-phosphate into L-glutamate 5-semialdehyde and phosphate. The product spontaneously undergoes cyclization to form 1-pyrroline-5-carboxylate. This chain is Gamma-glutamyl phosphate reductase, found in Mycolicibacterium gilvum (strain PYR-GCK) (Mycobacterium gilvum (strain PYR-GCK)).